A 225-amino-acid chain; its full sequence is Probable septum site-determining protein MinC (225 aa).

This sequence belongs to the MinC family. Interacts with MinD and FtsZ.

In terms of biological role, cell division inhibitor that blocks the formation of polar Z ring septums. Rapidly oscillates between the poles of the cell to destabilize FtsZ filaments that have formed before they mature into polar Z rings. Prevents FtsZ polymerization. The chain is Probable septum site-determining protein MinC from Listeria monocytogenes serotype 4b (strain CLIP80459).